Reading from the N-terminus, the 895-residue chain is Microsomal triglyceride transfer protein large subunit (895 aa).

Positions 1-18 (MILLAVLFLCFFSSYSAS) are cleaved as a signal peptide. One can recognise a Vitellogenin domain in the interval 28–659 (LNNERLYKLT…VFQYLGKAGL (632 aa)). A disulfide bridge links Cys174 with Cys194.

As to quaternary structure, heterodimer; heterodimerizes with the protein disulfide isomerase (P4HB/PDI). Interacts with APOB. Interacts with PRAP1.

Its subcellular location is the endoplasmic reticulum. The protein resides in the golgi apparatus. It carries out the reaction a 1,2-diacyl-sn-glycero-3-phosphocholine(in) = a 1,2-diacyl-sn-glycero-3-phosphocholine(out). The catalysed reaction is a 1,2-diacyl-sn-glycero-3-phosphoethanolamine(in) = a 1,2-diacyl-sn-glycero-3-phosphoethanolamine(out). It catalyses the reaction a cholesterol ester(in) = a cholesterol ester(out). The enzyme catalyses a triacyl-sn-glycerol(in) = a triacyl-sn-glycerol(out). In terms of biological role, catalyzes the transport of triglyceride, cholesteryl ester, and phospholipid between phospholipid surfaces. Required for the assembly and secretion of plasma lipoproteins that contain apolipoprotein B. May be involved in regulating cholesteryl ester biosynthesis in cells that produce lipoproteins. The polypeptide is Microsomal triglyceride transfer protein large subunit (MTTP) (Mesocricetus auratus (Golden hamster)).